The following is a 1441-amino-acid chain: Probable ubiquitin-conjugating enzyme E2 R521 (1441 aa).

A helical transmembrane segment spans residues 20–40 (YIHHIIINYITNSILYFFLIM). Positions 63–89 (NQSKLVNTLDIIKDEINKWEEKNTDKD) form a coiled coil. The segment covering 180–199 (VSKDKMKDKSESNSEHEQES) has biased composition (basic and acidic residues). Disordered regions lie at residues 180 to 207 (VSKD…SNEI) and 283 to 305 (IFGK…MSKV). A compositionally biased stretch (low complexity) spans 286–303 (KSKNSGPSSSKTSISSMS). Residues 340 to 368 (TTNEDNNDLDNLINEVERLVQETKDQETK) adopt a coiled-coil conformation. The segment covering 505–538 (TVEPVQEVAEEPVQQEVAEEPVQQEVAEEPVQQE) has biased composition (low complexity). 2 disordered regions span residues 505–554 (TVEP…PVQK) and 577–605 (NDFS…NNLG). Acidic residues predominate over residues 539 to 549 (VAEEPVQEVAE). The UBC core domain occupies 1217 to 1380 (AISRELLSHS…VRFNCMKWAM (164 aa)). The active-site Glycyl thioester intermediate is the Cys1306.

The protein belongs to the ubiquitin-conjugating enzyme family.

The protein resides in the membrane. It carries out the reaction S-ubiquitinyl-[E1 ubiquitin-activating enzyme]-L-cysteine + [E2 ubiquitin-conjugating enzyme]-L-cysteine = [E1 ubiquitin-activating enzyme]-L-cysteine + S-ubiquitinyl-[E2 ubiquitin-conjugating enzyme]-L-cysteine.. Its pathway is protein modification; protein ubiquitination. In terms of biological role, catalyzes the covalent attachment of ubiquitin to other proteins. The chain is Probable ubiquitin-conjugating enzyme E2 R521 from Acanthamoeba polyphaga (Amoeba).